The following is a 311-amino-acid chain: tRNA N6-adenosine threonylcarbamoyltransferase (311 aa).

Residues His-108 and His-112 each contribute to the Fe cation site. Substrate is bound by residues 130 to 134 (LVSGG), Asp-163, Gly-176, Asp-180, and Asn-270. Asp-294 serves as a coordination point for Fe cation.

It belongs to the KAE1 / TsaD family. It depends on Fe(2+) as a cofactor.

Its subcellular location is the cytoplasm. The enzyme catalyses L-threonylcarbamoyladenylate + adenosine(37) in tRNA = N(6)-L-threonylcarbamoyladenosine(37) in tRNA + AMP + H(+). Its function is as follows. Required for the formation of a threonylcarbamoyl group on adenosine at position 37 (t(6)A37) in tRNAs that read codons beginning with adenine. Is involved in the transfer of the threonylcarbamoyl moiety of threonylcarbamoyl-AMP (TC-AMP) to the N6 group of A37, together with TsaE and TsaB. TsaD likely plays a direct catalytic role in this reaction. In Metamycoplasma arthritidis (strain 158L3-1) (Mycoplasma arthritidis), this protein is tRNA N6-adenosine threonylcarbamoyltransferase.